Consider the following 473-residue polypeptide: tRNA-2-methylthio-N(6)-dimethylallyladenosine synthase (473 aa).

An MTTase N-terminal domain is found at M3–E120. [4Fe-4S] cluster is bound by residues C12, C49, C83, C157, C161, and C164. Residues K143 to G375 enclose the Radical SAM core domain. A TRAM domain is found at R378–R441.

The protein belongs to the methylthiotransferase family. MiaB subfamily. In terms of assembly, monomer. Requires [4Fe-4S] cluster as cofactor.

It localises to the cytoplasm. The enzyme catalyses N(6)-dimethylallyladenosine(37) in tRNA + (sulfur carrier)-SH + AH2 + 2 S-adenosyl-L-methionine = 2-methylsulfanyl-N(6)-dimethylallyladenosine(37) in tRNA + (sulfur carrier)-H + 5'-deoxyadenosine + L-methionine + A + S-adenosyl-L-homocysteine + 2 H(+). Catalyzes the methylthiolation of N6-(dimethylallyl)adenosine (i(6)A), leading to the formation of 2-methylthio-N6-(dimethylallyl)adenosine (ms(2)i(6)A) at position 37 in tRNAs that read codons beginning with uridine. The protein is tRNA-2-methylthio-N(6)-dimethylallyladenosine synthase of Psychromonas ingrahamii (strain DSM 17664 / CCUG 51855 / 37).